Consider the following 257-residue polypeptide: tRNA pseudouridine synthase A (257 aa).

Aspartate 43 acts as the Nucleophile in catalysis. Tyrosine 94 provides a ligand contact to substrate.

Belongs to the tRNA pseudouridine synthase TruA family.

It catalyses the reaction uridine(38/39/40) in tRNA = pseudouridine(38/39/40) in tRNA. Functionally, formation of pseudouridine at positions 38, 39 and 40 in the anticodon stem and loop of transfer RNAs. The polypeptide is tRNA pseudouridine synthase A (Pyrobaculum calidifontis (strain DSM 21063 / JCM 11548 / VA1)).